We begin with the raw amino-acid sequence, 561 residues long: Dihydroxy-acid dehydratase 2 (561 aa).

Cys53 provides a ligand contact to [2Fe-2S] cluster. Asp85 contacts Mg(2+). Cys126 contacts [2Fe-2S] cluster. Asp127 and Lys128 together coordinate Mg(2+). An N6-carboxylysine modification is found at Lys128. Cys195 contributes to the [2Fe-2S] cluster binding site. Glu446 contributes to the Mg(2+) binding site. The active-site Proton acceptor is the Ser472.

Belongs to the IlvD/Edd family. In terms of assembly, homodimer. The cofactor is [2Fe-2S] cluster. Mg(2+) serves as cofactor.

The enzyme catalyses (2R)-2,3-dihydroxy-3-methylbutanoate = 3-methyl-2-oxobutanoate + H2O. It carries out the reaction (2R,3R)-2,3-dihydroxy-3-methylpentanoate = (S)-3-methyl-2-oxopentanoate + H2O. It functions in the pathway amino-acid biosynthesis; L-isoleucine biosynthesis; L-isoleucine from 2-oxobutanoate: step 3/4. The protein operates within amino-acid biosynthesis; L-valine biosynthesis; L-valine from pyruvate: step 3/4. Functions in the biosynthesis of branched-chain amino acids. Catalyzes the dehydration of (2R,3R)-2,3-dihydroxy-3-methylpentanoate (2,3-dihydroxy-3-methylvalerate) into 2-oxo-3-methylpentanoate (2-oxo-3-methylvalerate) and of (2R)-2,3-dihydroxy-3-methylbutanoate (2,3-dihydroxyisovalerate) into 2-oxo-3-methylbutanoate (2-oxoisovalerate), the penultimate precursor to L-isoleucine and L-valine, respectively. This chain is Dihydroxy-acid dehydratase 2, found in Acinetobacter baylyi (strain ATCC 33305 / BD413 / ADP1).